Reading from the N-terminus, the 89-residue chain is Small ribosomal subunit protein uS15 (89 aa).

Residues 1-25 (MSLDTTEKQQLINTHQTHGTDTGSA) are disordered. The segment covering 8–25 (KQQLINTHQTHGTDTGSA) has biased composition (polar residues).

The protein belongs to the universal ribosomal protein uS15 family. As to quaternary structure, part of the 30S ribosomal subunit. Forms a bridge to the 50S subunit in the 70S ribosome, contacting the 23S rRNA.

Functionally, one of the primary rRNA binding proteins, it binds directly to 16S rRNA where it helps nucleate assembly of the platform of the 30S subunit by binding and bridging several RNA helices of the 16S rRNA. Its function is as follows. Forms an intersubunit bridge (bridge B4) with the 23S rRNA of the 50S subunit in the ribosome. The chain is Small ribosomal subunit protein uS15 from Synechococcus sp. (strain CC9605).